Here is a 349-residue protein sequence, read N- to C-terminus: 5-deoxyribose 1-phosphate isomerase (349 aa).

Residues 49 to 51 (RGA), arginine 92, and glutamine 199 contribute to the substrate site. Aspartate 240 functions as the Proton donor in the catalytic mechanism. 250–251 (NK) serves as a coordination point for substrate.

The protein belongs to the EIF-2B alpha/beta/delta subunits family. DrdI subfamily.

It catalyses the reaction 5-deoxy-alpha-D-ribose 1-phosphate = 5-deoxy-D-ribulose 1-phosphate. It functions in the pathway carbohydrate degradation. Catalyzes the isomerization of 5-deoxy-alpha-D-ribose 1-phosphate to 5-deoxy-D-ribulose 1-phosphate, as part of a 5-deoxyribose salvage pathway that recycles this toxic radical SAM enzyme by-product to mainstream metabolites. In Clostridium botulinum (strain Kyoto / Type A2), this protein is 5-deoxyribose 1-phosphate isomerase.